Reading from the N-terminus, the 71-residue chain is Large ribosomal subunit protein uL29 (71 aa).

It belongs to the universal ribosomal protein uL29 family.

This chain is Large ribosomal subunit protein uL29 (rpl29), found in Aeropyrum pernix (strain ATCC 700893 / DSM 11879 / JCM 9820 / NBRC 100138 / K1).